A 316-amino-acid chain; its full sequence is tRNA dimethylallyltransferase (316 aa).

13–20 (GPTAVGKT) contacts ATP. 15–20 (TAVGKT) is a substrate binding site. The tract at residues 38 to 41 (DSIQ) is interaction with substrate tRNA.

This sequence belongs to the IPP transferase family. In terms of assembly, monomer. Mg(2+) is required as a cofactor.

It carries out the reaction adenosine(37) in tRNA + dimethylallyl diphosphate = N(6)-dimethylallyladenosine(37) in tRNA + diphosphate. Functionally, catalyzes the transfer of a dimethylallyl group onto the adenine at position 37 in tRNAs that read codons beginning with uridine, leading to the formation of N6-(dimethylallyl)adenosine (i(6)A). The sequence is that of tRNA dimethylallyltransferase from Staphylococcus carnosus (strain TM300).